Consider the following 622-residue polypeptide: Low affinity potassium transport system protein Kup (622 aa).

The next 12 membrane-spanning stretches (helical) occupy residues 9–29, 49–69, 103–123, 137–157, 165–185, 213–233, 247–267, 276–296, 337–357, 363–383, 396–416, and 419–439; these read LPAI…TSPL, VFGF…IKYL, VIMG…TPAI, PQLD…LFMI, VGKL…GLGL, VSFI…ALYA, WFTV…ALLL, PFFL…AALA, IYIP…IVSF, LAAA…ILST, FVAL…TANL, and LLSG…VMTT.

This sequence belongs to the HAK/KUP transporter (TC 2.A.72) family.

It is found in the cell inner membrane. The enzyme catalyses K(+)(in) + H(+)(in) = K(+)(out) + H(+)(out). Its function is as follows. Responsible for the low-affinity transport of potassium into the cell. Likely operates as a K(+):H(+) symporter. The protein is Low affinity potassium transport system protein Kup of Escherichia coli O157:H7 (strain EC4115 / EHEC).